The chain runs to 290 residues: Undecaprenyl-diphosphatase 2 (290 aa).

The next 6 membrane-spanning stretches (helical) occupy residues 104-124 (WMVI…KDLI), 128-148 (LRNL…FILA), 174-194 (CLAL…GLFL), 205-225 (SFLL…PDAF), 237-257 (QLFV…AWLL), and 268-288 (FALW…FGVL).

The protein belongs to the UppP family.

The protein resides in the cell membrane. The enzyme catalyses di-trans,octa-cis-undecaprenyl diphosphate + H2O = di-trans,octa-cis-undecaprenyl phosphate + phosphate + H(+). In terms of biological role, catalyzes the dephosphorylation of undecaprenyl diphosphate (UPP). Confers resistance to bacitracin. The sequence is that of Undecaprenyl-diphosphatase 2 from Corynebacterium jeikeium (strain K411).